Reading from the N-terminus, the 282-residue chain is Probable septum site-determining protein MinC (282 aa).

The interval 108–127 (AAARSADEESANAAAAAPAA) is disordered. Residues 118 to 127 (ANAAAAAPAA) are compositionally biased toward low complexity.

The protein belongs to the MinC family. Interacts with MinD and FtsZ.

In terms of biological role, cell division inhibitor that blocks the formation of polar Z ring septums. Rapidly oscillates between the poles of the cell to destabilize FtsZ filaments that have formed before they mature into polar Z rings. Prevents FtsZ polymerization. The protein is Probable septum site-determining protein MinC of Paraburkholderia xenovorans (strain LB400).